The sequence spans 260 residues: Imidazole glycerol phosphate synthase subunit HisF (260 aa).

Active-site residues include Asp-11 and Asp-130.

The protein belongs to the HisA/HisF family. As to quaternary structure, heterodimer of HisH and HisF.

Its subcellular location is the cytoplasm. The enzyme catalyses 5-[(5-phospho-1-deoxy-D-ribulos-1-ylimino)methylamino]-1-(5-phospho-beta-D-ribosyl)imidazole-4-carboxamide + L-glutamine = D-erythro-1-(imidazol-4-yl)glycerol 3-phosphate + 5-amino-1-(5-phospho-beta-D-ribosyl)imidazole-4-carboxamide + L-glutamate + H(+). It functions in the pathway amino-acid biosynthesis; L-histidine biosynthesis; L-histidine from 5-phospho-alpha-D-ribose 1-diphosphate: step 5/9. IGPS catalyzes the conversion of PRFAR and glutamine to IGP, AICAR and glutamate. The HisF subunit catalyzes the cyclization activity that produces IGP and AICAR from PRFAR using the ammonia provided by the HisH subunit. This Psychrobacter cryohalolentis (strain ATCC BAA-1226 / DSM 17306 / VKM B-2378 / K5) protein is Imidazole glycerol phosphate synthase subunit HisF.